The following is a 65-amino-acid chain: Cold shock-like protein CspB (65 aa).

One can recognise a CSD domain in the interval 3-62 (GKVKWFNNEKGFGFIEMEGSEDVFVHFSAIQSDGYKALEEGQEVSFDITEGNRGPQAANV).

In terms of assembly, homodimer.

Its subcellular location is the cytoplasm. The polypeptide is Cold shock-like protein CspB (cspB) (Bacillus cereus).